The following is a 108-amino-acid chain: Structural protein 1 (108 aa).

A disordered region spans residues 1-20; that stretch reads MSRVSEYGVPEGVRESDSDT. Topologically, residues 1–77 are intravirion; the sequence is MSRVSEYGVP…LKMQMDRLCN (77 aa). The helical; Signal-anchor for type II membrane protein transmembrane segment at 78–98 threads the bilayer; the sequence is VLGVVLQMATLALVTYIAFVV. At 99-108 the chain is on the virion surface side; that stretch reads HTRATSCKRE.

Belongs to the varicellovirus ORF1 protein family. Homodimer. Post-translationally, phosphorylated.

The protein resides in the virion membrane. Its subcellular location is the host Golgi apparatus membrane. In Varicella-zoster virus (strain Dumas) (HHV-3), this protein is Structural protein 1.